A 163-amino-acid polypeptide reads, in one-letter code: R-phycoerythrin alpha chain (163 aa).

(2R,3E)-phycoerythrobilin contacts are provided by cysteine 82 and cysteine 139.

Belongs to the phycobiliprotein family. Heterodimer of an alpha and a beta chain. Contains two covalently linked bilin chromophores.

It is found in the plastid. The protein localises to the chloroplast thylakoid membrane. Its function is as follows. Light-harvesting photosynthetic bile pigment-protein from the phycobiliprotein complex. In Aglaothamnion neglectum (Red alga), this protein is R-phycoerythrin alpha chain (cpeA).